We begin with the raw amino-acid sequence, 413 residues long: Adenylosuccinate synthetase (413 aa).

GTP is bound by residues glycine 11–lysine 17 and glycine 39–threonine 41. Aspartate 12 serves as the catalytic Proton acceptor. Mg(2+)-binding residues include aspartate 12 and glycine 39. Residues aspartate 12 to lysine 15, asparagine 37 to histidine 40, threonine 125, arginine 139, glutamine 217, threonine 232, and arginine 296 contribute to the IMP site. The active-site Proton donor is histidine 40. Substrate is bound at residue threonine 292–arginine 298. GTP contacts are provided by residues arginine 298, lysine 324–aspartate 326, and serine 402–glycine 404.

It belongs to the adenylosuccinate synthetase family. Homodimer. Mg(2+) is required as a cofactor.

The protein localises to the cytoplasm. The enzyme catalyses IMP + L-aspartate + GTP = N(6)-(1,2-dicarboxyethyl)-AMP + GDP + phosphate + 2 H(+). Its pathway is purine metabolism; AMP biosynthesis via de novo pathway; AMP from IMP: step 1/2. Plays an important role in the de novo pathway of purine nucleotide biosynthesis. Catalyzes the first committed step in the biosynthesis of AMP from IMP. The protein is Adenylosuccinate synthetase of Nautilia profundicola (strain ATCC BAA-1463 / DSM 18972 / AmH).